We begin with the raw amino-acid sequence, 442 residues long: Elongation factor 1-alpha (442 aa).

Residues 6–229 (KPHMNLIVIG…ALDNLKPPSV (224 aa)) form the tr-type G domain. The G1 stretch occupies residues 15 to 22 (GHVDHGKS). Position 15 to 22 (15 to 22 (GHVDHGKS)) interacts with GTP. A Mg(2+)-binding site is contributed by Ser22. The tract at residues 71 to 75 (GVTID) is G2. Positions 92–95 (DAPG) are G3. GTP is bound by residues 92-96 (DAPGH) and 154-157 (NKMD). The interval 154 to 157 (NKMD) is G4. Residues 195-197 (SAW) form a G5 region.

It belongs to the TRAFAC class translation factor GTPase superfamily. Classic translation factor GTPase family. EF-Tu/EF-1A subfamily.

It localises to the cytoplasm. It catalyses the reaction GTP + H2O = GDP + phosphate + H(+). Its function is as follows. GTP hydrolase that promotes the GTP-dependent binding of aminoacyl-tRNA to the A-site of ribosomes during protein biosynthesis. This chain is Elongation factor 1-alpha, found in Ignicoccus hospitalis (strain KIN4/I / DSM 18386 / JCM 14125).